Reading from the N-terminus, the 309-residue chain is tRNA-dihydrouridine(16) synthase (309 aa).

FMN contacts are provided by residues 7–9 (PME) and Gln-68. Cys-98 functions as the Proton donor in the catalytic mechanism. FMN contacts are provided by residues Arg-137, Asn-198, and 220 to 221 (GC).

This sequence belongs to the Dus family. DusC subfamily. FMN serves as cofactor.

It carries out the reaction 5,6-dihydrouridine(16) in tRNA + NADP(+) = uridine(16) in tRNA + NADPH + H(+). It catalyses the reaction 5,6-dihydrouridine(16) in tRNA + NAD(+) = uridine(16) in tRNA + NADH + H(+). In terms of biological role, catalyzes the synthesis of 5,6-dihydrouridine (D), a modified base found in the D-loop of most tRNAs, via the reduction of the C5-C6 double bond in target uridines. Specifically modifies U16 in tRNAs. The protein is tRNA-dihydrouridine(16) synthase of Azotobacter vinelandii.